A 369-amino-acid polypeptide reads, in one-letter code: Holliday junction branch migration complex subunit RuvB (369 aa).

Positions 1-21 are disordered; it reads MHKNENNRLLGSVSLPDDPDR. Positions 1 to 184 are large ATPase domain (RuvB-L); sequence MHKNENNRLL…FGIPIRLNFY (184 aa). Residues Leu-23, Arg-24, Gly-65, Lys-68, Thr-69, Thr-70, 131 to 133, Arg-174, Tyr-184, and Arg-221 contribute to the ATP site; that span reads EDY. Position 69 (Thr-69) interacts with Mg(2+). Positions 185 to 255 are small ATPAse domain (RuvB-S); the sequence is TIEELEYIVK…IADTALSRLE (71 aa). The tract at residues 258–369 is head domain (RuvB-H); that stretch reads HLGLDPLDRN…QKHLWEKDYD (112 aa). The DNA site is built by Arg-294, Arg-313, and Arg-318.

It belongs to the RuvB family. As to quaternary structure, homohexamer. Forms an RuvA(8)-RuvB(12)-Holliday junction (HJ) complex. HJ DNA is sandwiched between 2 RuvA tetramers; dsDNA enters through RuvA and exits via RuvB. An RuvB hexamer assembles on each DNA strand where it exits the tetramer. Each RuvB hexamer is contacted by two RuvA subunits (via domain III) on 2 adjacent RuvB subunits; this complex drives branch migration. In the full resolvosome a probable DNA-RuvA(4)-RuvB(12)-RuvC(2) complex forms which resolves the HJ.

It is found in the cytoplasm. It carries out the reaction ATP + H2O = ADP + phosphate + H(+). In terms of biological role, the RuvA-RuvB-RuvC complex processes Holliday junction (HJ) DNA during genetic recombination and DNA repair, while the RuvA-RuvB complex plays an important role in the rescue of blocked DNA replication forks via replication fork reversal (RFR). RuvA specifically binds to HJ cruciform DNA, conferring on it an open structure. The RuvB hexamer acts as an ATP-dependent pump, pulling dsDNA into and through the RuvAB complex. RuvB forms 2 homohexamers on either side of HJ DNA bound by 1 or 2 RuvA tetramers; 4 subunits per hexamer contact DNA at a time. Coordinated motions by a converter formed by DNA-disengaged RuvB subunits stimulates ATP hydrolysis and nucleotide exchange. Immobilization of the converter enables RuvB to convert the ATP-contained energy into a lever motion, pulling 2 nucleotides of DNA out of the RuvA tetramer per ATP hydrolyzed, thus driving DNA branch migration. The RuvB motors rotate together with the DNA substrate, which together with the progressing nucleotide cycle form the mechanistic basis for DNA recombination by continuous HJ branch migration. Branch migration allows RuvC to scan DNA until it finds its consensus sequence, where it cleaves and resolves cruciform DNA. The sequence is that of Holliday junction branch migration complex subunit RuvB from Bartonella bacilliformis (strain ATCC 35685 / KC583 / Herrer 020/F12,63).